Reading from the N-terminus, the 468-residue chain is ATP synthase subunit beta 1 (468 aa).

151 to 158 is an ATP binding site; it reads GGAGVGKT.

It belongs to the ATPase alpha/beta chains family. F-type ATPases have 2 components, CF(1) - the catalytic core - and CF(0) - the membrane proton channel. CF(1) has five subunits: alpha(3), beta(3), gamma(1), delta(1), epsilon(1). CF(0) has three main subunits: a(1), b(2) and c(9-12). The alpha and beta chains form an alternating ring which encloses part of the gamma chain. CF(1) is attached to CF(0) by a central stalk formed by the gamma and epsilon chains, while a peripheral stalk is formed by the delta and b chains.

The protein localises to the cell inner membrane. It carries out the reaction ATP + H2O + 4 H(+)(in) = ADP + phosphate + 5 H(+)(out). Produces ATP from ADP in the presence of a proton gradient across the membrane. The catalytic sites are hosted primarily by the beta subunits. The sequence is that of ATP synthase subunit beta 1 from Photobacterium profundum (strain SS9).